A 271-amino-acid polypeptide reads, in one-letter code: Zinc finger protein 501 (271 aa).

9 consecutive C2H2-type zinc fingers follow at residues Ser-22–His-44, Tyr-50–His-72, Tyr-78–His-100, Tyr-106–His-128, Tyr-134–His-156, Phe-162–His-184, Tyr-190–His-212, Tyr-218–His-240, and Tyr-246–His-268.

It belongs to the krueppel C2H2-type zinc-finger protein family.

It localises to the nucleus. It is found in the nucleolus. May be involved in transcriptional regulation. Essential for Golgi structural integrity. The sequence is that of Zinc finger protein 501 (ZNF501) from Homo sapiens (Human).